Here is an 89-residue protein sequence, read N- to C-terminus: Small ribosomal subunit protein uS15 (89 aa).

Belongs to the universal ribosomal protein uS15 family. Part of the 30S ribosomal subunit. Forms a bridge to the 50S subunit in the 70S ribosome, contacting the 23S rRNA.

Functionally, one of the primary rRNA binding proteins, it binds directly to 16S rRNA where it helps nucleate assembly of the platform of the 30S subunit by binding and bridging several RNA helices of the 16S rRNA. Its function is as follows. Forms an intersubunit bridge (bridge B4) with the 23S rRNA of the 50S subunit in the ribosome. This chain is Small ribosomal subunit protein uS15, found in Azorhizobium caulinodans (strain ATCC 43989 / DSM 5975 / JCM 20966 / LMG 6465 / NBRC 14845 / NCIMB 13405 / ORS 571).